A 279-amino-acid chain; its full sequence is Small ribosomal subunit protein uS2 (279 aa).

Acidic residues-rich tracts occupy residues Met1–Val18, Thr28–Asn42, and Ala65–Asp81. Residues Met1–Asp81 are disordered.

It belongs to the universal ribosomal protein uS2 family.

The protein is Small ribosomal subunit protein uS2 of Haloquadratum walsbyi (strain DSM 16790 / HBSQ001).